The sequence spans 96 residues: GTPase HRas (96 aa).

Position 1 is an N-acetylmethionine (methionine 1). Residue threonine 2 is modified to N-acetylthreonine; in GTPase HRas, N-terminally processed. 10–17 (GAGGVGKS) is a GTP binding site. Positions 32 to 40 (YDPTIEDSY) match the Effector region motif. 57 to 61 (DTAGQ) serves as a coordination point for GTP.

Belongs to the small GTPase superfamily. Ras family. In terms of assembly, in its GTP-bound form interacts with PLCE1. Interacts with TBC1D10C. Interacts with RGL3. Interacts with HSPD1. Found in a complex with at least BRAF, HRAS, MAP2K1, MAPK3 and RGS14. Interacts (active GTP-bound form) with RGS14 (via RBD 1 domain). Forms a signaling complex with RASGRP1 and DGKZ. Interacts with RASSF5. Interacts with PDE6D. Interacts with IKZF3. Interacts with RACK1. Interacts with PIK3CG; the interaction is required for membrane recruitment and beta-gamma G protein dimer-dependent activation of the PI3K gamma complex PIK3CG:PIK3R6. Interacts with RAPGEF2. Interacts (active GTP-bound form) with both SHOC2 and PP1c (all isoforms) to form a tertiary complex; SHOC2 and PP1c preferably bind M-Ras/MRAS, but they also bind K-Ras/KRAS, N-Ras/NRAS and H-Ras/HRAS. Interacts (in GTP-bound form) with Oog1. Interacts (GTP-bound form) with MAPKAP1/SIN1; inhibiting H-Ras/HRAS activity. Post-translationally, ubiquitinated by the BCR(LZTR1) E3 ubiquitin ligase complex at Lys-170 in a non-degradative manner, leading to inhibit Ras signaling by decreasing Ras association with membranes.

It is found in the cell membrane. The protein localises to the golgi apparatus. It localises to the golgi apparatus membrane. The enzyme catalyses GTP + H2O = GDP + phosphate + H(+). Alternates between an inactive form bound to GDP and an active form bound to GTP. Activated by a guanine nucleotide-exchange factor (GEF) and inactivated by a GTPase-activating protein (GAP). In terms of biological role, ras proteins bind GDP/GTP and possess intrinsic GTPase activity. This Mesocricetus auratus (Golden hamster) protein is GTPase HRas (HRAS).